A 492-amino-acid polypeptide reads, in one-letter code: Ketol-acid reductoisomerase (NADP(+)) (492 aa).

In terms of domain architecture, KARI N-terminal Rossmann spans 15 to 208 (AQLGKCRFMA…GAHRAGVLES (194 aa)). Residues 45–48 (CGAQ), R68, R76, S78, and 108–110 (DKQ) contribute to the NADP(+) site. H132 is an active-site residue. G158 is a binding site for NADP(+). 2 KARI C-terminal knotted domains span residues 209 to 344 (SFVA…NSPE) and 345 to 485 (YDGK…MTDM). Positions 217, 221, 389, and 393 each coordinate Mg(2+). S414 contributes to the substrate binding site.

The protein belongs to the ketol-acid reductoisomerase family. Requires Mg(2+) as cofactor.

It carries out the reaction (2R)-2,3-dihydroxy-3-methylbutanoate + NADP(+) = (2S)-2-acetolactate + NADPH + H(+). The enzyme catalyses (2R,3R)-2,3-dihydroxy-3-methylpentanoate + NADP(+) = (S)-2-ethyl-2-hydroxy-3-oxobutanoate + NADPH + H(+). The protein operates within amino-acid biosynthesis; L-isoleucine biosynthesis; L-isoleucine from 2-oxobutanoate: step 2/4. It participates in amino-acid biosynthesis; L-valine biosynthesis; L-valine from pyruvate: step 2/4. Involved in the biosynthesis of branched-chain amino acids (BCAA). Catalyzes an alkyl-migration followed by a ketol-acid reduction of (S)-2-acetolactate (S2AL) to yield (R)-2,3-dihydroxy-isovalerate. In the isomerase reaction, S2AL is rearranged via a Mg-dependent methyl migration to produce 3-hydroxy-3-methyl-2-ketobutyrate (HMKB). In the reductase reaction, this 2-ketoacid undergoes a metal-dependent reduction by NADPH to yield (R)-2,3-dihydroxy-isovalerate. The protein is Ketol-acid reductoisomerase (NADP(+)) of Photorhabdus laumondii subsp. laumondii (strain DSM 15139 / CIP 105565 / TT01) (Photorhabdus luminescens subsp. laumondii).